Consider the following 118-residue polypeptide: UPF0449 protein C19orf25 (118 aa).

Residue Tyr63 is modified to Phosphotyrosine. The stretch at 81-109 (NVLRQRCELLQRAGEDLEREVAQMKQAAL) forms a coiled coil.

Belongs to the UPF0449 family.

The polypeptide is UPF0449 protein C19orf25 (C19orf25) (Homo sapiens (Human)).